A 104-amino-acid chain; its full sequence is Ig lambda-3 chain C region (104 aa).

Positions 6 to 99 (PTLTMFPPSP…EGDTVEKSLS (94 aa)) constitute an Ig-like domain. A disulfide bridge links cysteine 27 with cysteine 85.

This Mus musculus (Mouse) protein is Ig lambda-3 chain C region (Iglc3).